The primary structure comprises 347 residues: Bombesin receptor-activated protein C6orf89 homolog (347 aa).

Residues 1-58 (MDLAANEISIYDKLSETVDLVRQTGHQCGMSEKAIEKFIRQLLEKNEPQRPPPQYPLL) lie on the Cytoplasmic side of the membrane. Residues 59–79 (IVVYKVLATLGLILLTAYFVI) form a helical membrane-spanning segment. Over 80–347 (QPFSPLAPEP…ICDGTAFSEL (268 aa)) the chain is Extracellular.

In terms of assembly, homodimer. Interacts with BRS3. Interacts (via N-terminus) with SIN3B. Glycosylated.

The protein localises to the golgi apparatus membrane. The protein resides in the cytoplasm. Its function is as follows. Exhibits histone deacetylase (HDAC) enhancer properties. May play a role in cell cycle progression and wound repair of bronchial epithelial cells. This Pongo abelii (Sumatran orangutan) protein is Bombesin receptor-activated protein C6orf89 homolog.